Here is an 82-residue protein sequence, read N- to C-terminus: 4-(gamma-L-glutamylamino)butanoyl-[BtrI acyl-carrier protein] monooxygenase BtrO (82 aa).

In terms of assembly, homotetramer.

The catalysed reaction is 4-(gamma-L-glutamylamino)butanoyl-[BtrI ACP] + FMNH2 + O2 = 4-(gamma-L-glutamylamino)-(2S)-2-hydroxybutanoyl-[BtrI ACP] + FMN + H2O + H(+). It participates in antibiotic biosynthesis; butirosin biosynthesis. Functionally, NAD(P)H:FMN oxidoreductase component of a two-component system involved in the biosynthesis of the side chain of the aminoglycoside antibiotics in the biosynthetic pathway of butirosin. Together with BtrO, mediates hydroxylation of gamma-L-Glu-GABA-S-BtrI. This is 4-(gamma-L-glutamylamino)butanoyl-[BtrI acyl-carrier protein] monooxygenase BtrO (btrV) from Niallia circulans (Bacillus circulans).